Here is a 551-residue protein sequence, read N- to C-terminus: 2-(3-amino-3-carboxypropyl)histidine synthase subunit 2 (551 aa).

Residues Cys116, Cys137, and Cys371 each contribute to the [4Fe-4S] cluster site.

It belongs to the DPH1/DPH2 family. DPH2 subfamily. As to quaternary structure, component of the 2-(3-amino-3-carboxypropyl)histidine synthase complex composed of DPH1, DPH2, DPH3 and a NADH-dependent reductase, predominantly CBR1. [4Fe-4S] cluster is required as a cofactor.

It localises to the cytoplasm. The protein operates within protein modification; peptidyl-diphthamide biosynthesis. In terms of biological role, required for the first step of diphthamide biosynthesis, a post-translational modification of histidine which occurs in elongation factor 2. DPH1 and DPH2 transfer a 3-amino-3-carboxypropyl (ACP) group from S-adenosyl-L-methionine (SAM) to a histidine residue, the reaction is assisted by a reduction system comprising DPH3 and a NADH-dependent reductase, predominantly CBR1. Facilitates the reduction of the catalytic iron-sulfur cluster found in the DPH1 subunit. This Candida glabrata (strain ATCC 2001 / BCRC 20586 / JCM 3761 / NBRC 0622 / NRRL Y-65 / CBS 138) (Yeast) protein is 2-(3-amino-3-carboxypropyl)histidine synthase subunit 2 (DPH2).